A 296-amino-acid polypeptide reads, in one-letter code: 33 kDa chaperonin (296 aa).

Disulfide bonds link cysteine 233–cysteine 235 and cysteine 267–cysteine 270.

Belongs to the HSP33 family. In terms of processing, under oxidizing conditions two disulfide bonds are formed involving the reactive cysteines. Under reducing conditions zinc is bound to the reactive cysteines and the protein is inactive.

It is found in the cytoplasm. Functionally, redox regulated molecular chaperone. Protects both thermally unfolding and oxidatively damaged proteins from irreversible aggregation. Plays an important role in the bacterial defense system toward oxidative stress. The protein is 33 kDa chaperonin of Actinobacillus pleuropneumoniae serotype 3 (strain JL03).